We begin with the raw amino-acid sequence, 762 residues long: 5-methyltetrahydropteroyltriglutamate--homocysteine methyltransferase (762 aa).

5-methyltetrahydropteroyltri-L-glutamate-binding positions include 17-20 (REWK) and K111. L-homocysteine-binding positions include 435-437 (IGS) and E488. Residues 435-437 (IGS) and E488 contribute to the L-methionine site. Residues 519-520 (RC) and W565 each bind 5-methyltetrahydropteroyltri-L-glutamate. D603 serves as a coordination point for L-homocysteine. D603 contributes to the L-methionine binding site. 5-methyltetrahydropteroyltri-L-glutamate is bound at residue E609. Zn(2+)-binding residues include H645, C647, and E669. H698 acts as the Proton donor in catalysis. C730 contacts Zn(2+).

The protein belongs to the vitamin-B12 independent methionine synthase family. It depends on Zn(2+) as a cofactor.

It carries out the reaction 5-methyltetrahydropteroyltri-L-glutamate + L-homocysteine = tetrahydropteroyltri-L-glutamate + L-methionine. It functions in the pathway amino-acid biosynthesis; L-methionine biosynthesis via de novo pathway; L-methionine from L-homocysteine (MetE route): step 1/1. Functionally, catalyzes the transfer of a methyl group from 5-methyltetrahydrofolate to homocysteine resulting in methionine formation. This Bacillus cereus (strain AH187) protein is 5-methyltetrahydropteroyltriglutamate--homocysteine methyltransferase.